The sequence spans 401 residues: uncharacterized protein (401 aa).

The residue at position 242 (Lys-242) is an N6-(pyridoxal phosphate)lysine.

Belongs to the class-I pyridoxal-phosphate-dependent aminotransferase family. As to quaternary structure, homodimer. Pyridoxal 5'-phosphate serves as cofactor.

The protein resides in the cytoplasm. This is an uncharacterized protein from Saccharolobus solfataricus (strain ATCC 35092 / DSM 1617 / JCM 11322 / P2) (Sulfolobus solfataricus).